The following is an 82-amino-acid chain: Small ribosomal subunit protein bS16 (82 aa).

Belongs to the bacterial ribosomal protein bS16 family.

The sequence is that of Small ribosomal subunit protein bS16 from Acidobacterium capsulatum (strain ATCC 51196 / DSM 11244 / BCRC 80197 / JCM 7670 / NBRC 15755 / NCIMB 13165 / 161).